The following is a 293-amino-acid chain: Sec-independent protein translocase protein TatC (293 aa).

A run of 6 helical transmembrane segments spans residues 35–55 (AAIA…QPFI), 87–107 (LLKV…LYQA), 123–143 (LFGF…ISYF), 173–193 (ILKF…LVGI), 204–224 (ILKS…LTAP), and 228–248 (IMMM…AIGI).

This sequence belongs to the TatC family. The Tat system comprises two distinct complexes: a TatABC complex, containing multiple copies of TatA, TatB and TatC subunits, and a separate TatA complex, containing only TatA subunits. Substrates initially bind to the TatABC complex, which probably triggers association of the separate TatA complex to form the active translocon.

The protein resides in the cell membrane. Part of the twin-arginine translocation (Tat) system that transports large folded proteins containing a characteristic twin-arginine motif in their signal peptide across membranes. Together with TatB, TatC is part of a receptor directly interacting with Tat signal peptides. This is Sec-independent protein translocase protein TatC from Rothia mucilaginosa (strain DY-18) (Stomatococcus mucilaginosus).